The primary structure comprises 346 residues: MNPHAKLISIMSLALGTSITISSNHWILAWTGLEINTLAIIPLISKSHHPRAIEAAIKYFLTQSTASALILFSSMNNAWSTGQWDITQLNHPTSCLILTMAIAIKLGLVPFHFWFPEVLQGSSLITALLLSTLMKLPPMTLLLMTSQSLNPALLTLLAVSSALVGGWMGLNQTQTRKILAFSSISHLGWMIVIIIYNPKLTILTFIIYSLMTSTVFLSLSQIKVLKLSTMLISWTKTPMLNSTIMVTLLSLAGLPPLTGFMPKWLIIQELTKQEMTPVATTIAMLSLLGLFFYLRLAYHSTITLPPNSSNHMKLWRINTTPNTPTAILTVLSISLLPLSPLITTLV.

A run of 10 helical transmembrane segments spans residues 25–45, 52–72, 95–115, 124–144, 149–169, 178–196, 200–219, 247–267, 274–294, and 326–346; these read HWIL…PLIS, AIEA…LILF, CLIL…HFWF, LITA…LLLM, LNPA…GWMG, ILAF…IIIY, LTIL…FLSL, TLLS…WLII, EMTP…FFYL, and AILT…TTLV.

It belongs to the complex I subunit 2 family.

It is found in the mitochondrion inner membrane. It catalyses the reaction a ubiquinone + NADH + 5 H(+)(in) = a ubiquinol + NAD(+) + 4 H(+)(out). Core subunit of the mitochondrial membrane respiratory chain NADH dehydrogenase (Complex I) that is believed to belong to the minimal assembly required for catalysis. Complex I functions in the transfer of electrons from NADH to the respiratory chain. The immediate electron acceptor for the enzyme is believed to be ubiquinone. This chain is NADH-ubiquinone oxidoreductase chain 2 (MT-ND2), found in Coturnix japonica (Japanese quail).